Here is a 124-residue protein sequence, read N- to C-terminus: Fluoride-specific ion channel FluC (124 aa).

The next 4 membrane-spanning stretches (helical) occupy residues 4 to 24 (LLLV…ISIF), 35 to 55 (FGTL…YALG), 60 to 80 (ISPE…TTFS), and 102 to 122 (VVLN…LVFS). Na(+) is bound by residues Gly74 and Thr77.

This sequence belongs to the fluoride channel Fluc/FEX (TC 1.A.43) family.

The protein localises to the cell inner membrane. The catalysed reaction is fluoride(in) = fluoride(out). With respect to regulation, na(+) is not transported, but it plays an essential structural role and its presence is essential for fluoride channel function. Functionally, fluoride-specific ion channel. Important for reducing fluoride concentration in the cell, thus reducing its toxicity. This Shewanella oneidensis (strain ATCC 700550 / JCM 31522 / CIP 106686 / LMG 19005 / NCIMB 14063 / MR-1) protein is Fluoride-specific ion channel FluC.